We begin with the raw amino-acid sequence, 559 residues long: 2,3-bisphosphoglycerate-independent phosphoglycerate mutase (559 aa).

Mn(2+)-binding residues include Asp-28 and Ser-81. Ser-81 (phosphoserine intermediate) is an active-site residue. Substrate is bound by residues His-140, 170–171, Arg-206, Arg-213, 286–289, and Lys-361; these read RD and RADR. The Mn(2+) site is built by Asp-430, His-434, Asp-471, His-472, and His-501.

Belongs to the BPG-independent phosphoglycerate mutase family. As to quaternary structure, monomer. Mn(2+) serves as cofactor.

The protein localises to the cytoplasm. The catalysed reaction is (2R)-2-phosphoglycerate = (2R)-3-phosphoglycerate. The protein operates within carbohydrate degradation; glycolysis; pyruvate from D-glyceraldehyde 3-phosphate: step 3/5. Functionally, catalyzes the interconversion of 2-phosphoglycerate and 3-phosphoglycerate. The protein is 2,3-bisphosphoglycerate-independent phosphoglycerate mutase (PGM1) of Mesembryanthemum crystallinum (Common ice plant).